The sequence spans 1026 residues: Multidrug resistance protein MdtC (1026 aa).

A run of 11 helical transmembrane segments spans residues 15–35, 333–353, 360–380, 387–407, 431–451, 463–483, 528–548, 853–873, 897–917, 953–973, and 984–1004; these read ILIA…LPVA, EVEE…FLFL, LIPA…MYLC, LSLM…IVVL, VGFT…PLLL, FAVT…TLTP, LVGV…IAIP, LILI…LYES, LFNA…IGIV, PIMM…LSGG, and ITIV…TPVV.

Belongs to the resistance-nodulation-cell division (RND) (TC 2.A.6) family. MdtC subfamily. As to quaternary structure, part of a tripartite efflux system composed of MdtA, MdtB and MdtC. MdtC forms a heteromultimer with MdtB.

The protein localises to the cell inner membrane. The sequence is that of Multidrug resistance protein MdtC from Salmonella enteritidis PT4 (strain P125109).